Reading from the N-terminus, the 465-residue chain is Lactaldehyde dehydrogenase (465 aa).

220–225 contributes to the NAD(+) binding site; sequence GSVEVG. Residues Glu-240 and Cys-274 contribute to the active site.

Belongs to the aldehyde dehydrogenase family. As to quaternary structure, homotetramer.

The enzyme catalyses (S)-lactaldehyde + NAD(+) + H2O = (S)-lactate + NADH + 2 H(+). The protein operates within cofactor biosynthesis; coenzyme F420 biosynthesis. Functionally, involved in F420 biosynthesis through the oxidation of lactaldehyde to lactate. This chain is Lactaldehyde dehydrogenase, found in Methanococcus aeolicus (strain ATCC BAA-1280 / DSM 17508 / OCM 812 / Nankai-3).